Reading from the N-terminus, the 668-residue chain is tRNA 5-methylaminomethyl-2-thiouridine biosynthesis bifunctional protein MnmC (668 aa).

The tRNA (mnm(5)s(2)U34)-methyltransferase stretch occupies residues 1–245; sequence MKHYAIQPAN…KREMLCGVME (245 aa). The tract at residues 270–668 is FAD-dependent cmnm(5)s(2)U34 oxidoreductase; it reads IGGGIASALL…LLKGKAVKAG (399 aa).

It in the N-terminal section; belongs to the methyltransferase superfamily. tRNA (mnm(5)s(2)U34)-methyltransferase family. In the C-terminal section; belongs to the DAO family. Requires FAD as cofactor.

It localises to the cytoplasm. The catalysed reaction is 5-aminomethyl-2-thiouridine(34) in tRNA + S-adenosyl-L-methionine = 5-methylaminomethyl-2-thiouridine(34) in tRNA + S-adenosyl-L-homocysteine + H(+). Functionally, catalyzes the last two steps in the biosynthesis of 5-methylaminomethyl-2-thiouridine (mnm(5)s(2)U) at the wobble position (U34) in tRNA. Catalyzes the FAD-dependent demodification of cmnm(5)s(2)U34 to nm(5)s(2)U34, followed by the transfer of a methyl group from S-adenosyl-L-methionine to nm(5)s(2)U34, to form mnm(5)s(2)U34. In Escherichia coli O139:H28 (strain E24377A / ETEC), this protein is tRNA 5-methylaminomethyl-2-thiouridine biosynthesis bifunctional protein MnmC.